The following is a 419-amino-acid chain: Metacaspase-1 (419 aa).

A disordered region spans residues 1 to 109; sequence MSGYPGYNNG…PPQGMHAFGQ (109 aa). 2 stretches are compositionally biased toward pro residues: residues 18 to 37 and 45 to 61; these read QYPP…PPPQ and QPPP…PPPQ. Over residues 83-95 the composition is skewed to polar residues; that stretch reads SVNSNAYTNGNQN. Active-site residues include His-210 and Cys-266.

Belongs to the peptidase C14B family.

Its function is as follows. Involved in cell death (apoptosis). The protein is Metacaspase-1 (casA) of Botryotinia fuckeliana (strain B05.10) (Noble rot fungus).